Consider the following 1215-residue polypeptide: Homeodomain-interacting protein kinase 3 (1215 aa).

Lysine 27 is covalently cross-linked (Glycyl lysine isopeptide (Lys-Gly) (interchain with G-Cter in SUMO2)). Positions 197–525 (YEVLDFLGRG…PAETLNHPFV (329 aa)) constitute a Protein kinase domain. ATP contacts are provided by residues 203–211 (LGRGTFGQV) and lysine 226. Aspartate 322 acts as the Proton acceptor in catalysis. Tyrosine 359 carries the phosphotyrosine modification. The interaction with AR stretch occupies residues 767–944 (QNRGILVKLM…NSMSDEEQES (178 aa)). The interval 796–891 (NTNIPHSAFI…SQRHSLRECK (96 aa)) is interaction with FAS. A required for localization to nuclear speckles region spans residues 855–1011 (QTIIIADSPS…ENGLNADEHM (157 aa)). The segment at 866-918 (AVSVITISSDTDEEETSQRHSLRECKGSLDCEACQSTLNIDRMCSLSSPDSTL) is SUMO interaction motifs (SIM); required for nuclear localization and kinase activity. Residues 870 to 880 (ITISSDTDEEE) are interaction with UBL1. The span at 912-929 (SSPDSTLSTSSSGQSSPS) shows a compositional bias: low complexity. The interval 912 to 987 (SSPDSTLSTS…ELVSSADTET (76 aa)) is disordered. The span at 945-957 (SCDTVDGSPTSDS) shows a compositional bias: polar residues. A Glycyl lysine isopeptide (Lys-Gly) (interchain with G-Cter in SUMO) cross-link involves residue lysine 1208.

Belongs to the protein kinase superfamily. CMGC Ser/Thr protein kinase family. HIPK subfamily. In terms of assembly, interacts with Nkx1-2. Interacts with FAS and DAXX. Probably part of a complex consisting of HIPK3, FAS and FADD. Interacts with and stabilizes ligand-bound androgen receptor (AR). Interacts with UBL1/SUMO-1. Binds to NR5A1/SF1, SPEN/MINT and RUNX2. Autophosphorylated, but autophosphorylation is not required for catalytic activity. In terms of processing, may be sumoylated. In terms of tissue distribution, overexpressed in multidrug resistant cells. Highly expressed in heart and skeletal muscle, and at lower levels in placenta, pancreas, brain, spleen, prostate, thymus, testis, small intestine, colon and leukocytes. Not found in liver and lung.

It is found in the cytoplasm. The protein resides in the nucleus. It catalyses the reaction L-seryl-[protein] + ATP = O-phospho-L-seryl-[protein] + ADP + H(+). The catalysed reaction is L-threonyl-[protein] + ATP = O-phospho-L-threonyl-[protein] + ADP + H(+). Functionally, serine/threonine-protein kinase involved in transcription regulation, apoptosis and steroidogenic gene expression. Phosphorylates JUN and RUNX2. Seems to negatively regulate apoptosis by promoting FADD phosphorylation. Enhances androgen receptor-mediated transcription. May act as a transcriptional corepressor for NK homeodomain transcription factors. The phosphorylation of NR5A1 activates SF1 leading to increased steroidogenic gene expression upon cAMP signaling pathway stimulation. In osteoblasts, supports transcription activation: phosphorylates RUNX2 that synergizes with SPEN/MINT to enhance FGFR2-mediated activation of the osteocalcin FGF-responsive element (OCFRE). The chain is Homeodomain-interacting protein kinase 3 (HIPK3) from Homo sapiens (Human).